We begin with the raw amino-acid sequence, 160 residues long: Cytochrome b6-f complex subunit 4 (160 aa).

A run of 3 helical transmembrane segments spans residues 36–56, 95–115, and 131–151; these read LLYI…GLAV, LLGV…PFLE, and TVFL…TLPI.

It belongs to the cytochrome b family. PetD subfamily. In terms of assembly, the 4 large subunits of the cytochrome b6-f complex are cytochrome b6, subunit IV (17 kDa polypeptide, petD), cytochrome f and the Rieske protein, while the 4 small subunits are petG, petL, petM and petN. The complex functions as a dimer.

The protein resides in the plastid. The protein localises to the chloroplast thylakoid membrane. Its function is as follows. Component of the cytochrome b6-f complex, which mediates electron transfer between photosystem II (PSII) and photosystem I (PSI), cyclic electron flow around PSI, and state transitions. The protein is Cytochrome b6-f complex subunit 4 of Arabidopsis thaliana (Mouse-ear cress).